The following is a 103-amino-acid chain: MRQRLLPSVTSLLLVALLFPGSSQARHVNHSATEALGELRERAPGQGTNGFQLLRHAVKRDLLPPRTPPYQVHISHREARGPSFRICVDFLGPRWARGCSTGN.

The first 25 residues, 1 to 25, serve as a signal peptide directing secretion; it reads MRQRLLPSVTSLLLVALLFPGSSQA. N-linked (GlcNAc...) asparagine glycosylation is present at asparagine 29.

This sequence belongs to the SPAG11 family. As to expression, specifically expressed in caput and proximal corpus of epididymis (at protein level). Present in the epididymal epithelium and on the sperm surface, with a subacrosomal equatorial distribution on the sperm head (at protein level).

It is found in the secreted. In terms of biological role, has antimicrobial activity against E.coli. Plays a role in the defense response in the male reproductive tract, contributing to sperm maturation, storage and protection. This chain is Sperm-associated antigen 11B, found in Homo sapiens (Human).